Here is a 607-residue protein sequence, read N- to C-terminus: CUB and zona pellucida-like domain-containing protein 1 (607 aa).

Positions 1-24 (MELVRRLMPLTLLILSCLAELTMA) are cleaved as a signal peptide. Residues Cys17 and Cys58 are joined by a disulfide bond. 2 consecutive CUB domains span residues 25-146 (EAEG…YFFS) and 154-265 (CGGY…YTSI). Topologically, residues 25 to 568 (EAEGNASCTV…EETPNQPFNS (544 aa)) are lumenal. N-linked (GlcNAc...) asparagine glycosylation is found at Asn29, Asn57, and Asn67. 3 cysteine pairs are disulfide-bonded: Cys85-Cys107, Cys154-Cys180, and Cys207-Cys229. The 244-residue stretch at 276–519 (TCSSDRMRVI…SRCNQGCVSR (244 aa)) folds into the ZP domain. Asn394 and Asn419 each carry an N-linked (GlcNAc...) asparagine glycan. Cys442 and Cys498 are disulfide-bonded. Residues 569 to 589 (VHLFSFMVLALNVVTVATITV) traverse the membrane as a helical segment. Topologically, residues 590–607 (RHFVNQRADYKYQKLQNY) are cytoplasmic.

In terms of tissue distribution, detected in pancreas and epithelium of ovary. Expressed at higher levels in ovarian tumors than in normal tissue.

The protein localises to the zymogen granule membrane. Localized to zymogen granules, where it functions in trypsinogen activation. May indirectly regulate cell motility, cell-cell and cell/extracellular matrix interactions. This Homo sapiens (Human) protein is CUB and zona pellucida-like domain-containing protein 1.